Here is a 204-residue protein sequence, read N- to C-terminus: Carbon disulfide hydrolase (204 aa).

3 residues coordinate Zn(2+): Cys35, His88, and Cys91.

This sequence belongs to the beta-class carbonic anhydrase family. In terms of assembly, forms a hexadecameric catenane homooligomer, through interactions of two interlocked octameric rings. Exists as both octamers and hexadecamers in solution. It depends on Zn(2+) as a cofactor.

It carries out the reaction carbon disulfide + 2 H2O = 2 hydrogen sulfide + CO2 + 2 H(+). Its pathway is sulfur metabolism; hydrogen sulfide biosynthesis. Functionally, catalyzes the conversion of carbon disulfide into hydrogen sulfide and carbon dioxide, with carbonyl sulfide as an intermediate. Likely plays a key role in sulfur metabolism that allows Acidianus sp. A1-3 to grow on carbon disulfide as the main carbon and energy source. Does not show carbonic anhydrase activity (hydration of CO(2) to carbonate). This is Carbon disulfide hydrolase from Acidianus sp. (strain A1-3).